The following is a 637-amino-acid chain: Nuclear receptor subfamily 2 group C member 1-B (637 aa).

The nuclear receptor DNA-binding region spans 149–224 (VELCVVCGDK…LGMKQDSVQC (76 aa)). 2 NR C4-type zinc fingers span residues 152-172 (CVVC…CEGC) and 188-207 (CRGS…CQYC). The region spanning 383–624 (CVGSGSNLLP…SIIPYILRME (242 aa)) is the NR LBD domain.

Belongs to the nuclear hormone receptor family. NR2 subfamily.

It localises to the nucleus. Orphan nuclear receptor. Binds the IR7 element in the promoter of its own gene in an autoregulatory negative feedback mechanism. Primarily repressor of a broad range of genes. Binds to hormone response elements (HREs) consisting of two 5'-AGGTCA-3' half site direct repeat consensus sequences. The sequence is that of Nuclear receptor subfamily 2 group C member 1-B (nr2c1-b) from Xenopus laevis (African clawed frog).